Here is a 494-residue protein sequence, read N- to C-terminus: Glycerol kinase (494 aa).

Thr-12 provides a ligand contact to ADP. The ATP site is built by Thr-12, Thr-13, and Ser-14. Thr-12 is a sn-glycerol 3-phosphate binding site. Arg-16 contributes to the ADP binding site. 4 residues coordinate sn-glycerol 3-phosphate: Arg-82, Glu-83, Tyr-134, and Asp-243. Glycerol contacts are provided by Arg-82, Glu-83, Tyr-134, Asp-243, and Gln-244. Residues Thr-265 and Gly-308 each contribute to the ADP site. 4 residues coordinate ATP: Thr-265, Gly-308, Gln-312, and Gly-408. Gly-408 and Asn-412 together coordinate ADP.

It belongs to the FGGY kinase family.

The catalysed reaction is glycerol + ATP = sn-glycerol 3-phosphate + ADP + H(+). The protein operates within polyol metabolism; glycerol degradation via glycerol kinase pathway; sn-glycerol 3-phosphate from glycerol: step 1/1. Its activity is regulated as follows. Inhibited by fructose 1,6-bisphosphate (FBP). Key enzyme in the regulation of glycerol uptake and metabolism. Catalyzes the phosphorylation of glycerol to yield sn-glycerol 3-phosphate. The sequence is that of Glycerol kinase from Marinomonas sp. (strain MWYL1).